We begin with the raw amino-acid sequence, 893 residues long: UPF0182 protein CLB_0018 (893 aa).

The next 7 helical transmembrane spans lie at 9–29 (IPLFIIILFIAFFNKIINFII), 49–69 (AIIILMIPIFIIFFISIWMYY), 94–114 (LFFIFNFIVSIFLAYIFSSSY), 154–174 (VIISLLLFLVITTFIAYFILE), 202–222 (LAIVSGLIILFISFGHLIKIW), 246–266 (FYKIIVVITLISSIVTLLSIV), and 273–293 (VSICIGITIFLIVSQNIASFL).

Belongs to the UPF0182 family.

The protein resides in the cell membrane. The sequence is that of UPF0182 protein CLB_0018 from Clostridium botulinum (strain ATCC 19397 / Type A).